A 463-amino-acid chain; its full sequence is tRNA (guanine(37)-N(1))-methyltransferase (463 aa).

S-adenosyl-L-methionine contacts are provided by residues His-207, Asp-245–Leu-246, Asp-274–Gly-275, and Asn-305.

It belongs to the class I-like SAM-binding methyltransferase superfamily. TRM5/TYW2 family. In terms of assembly, monomer.

It localises to the mitochondrion matrix. The protein localises to the nucleus. Its subcellular location is the cytoplasm. The enzyme catalyses guanosine(37) in tRNA + S-adenosyl-L-methionine = N(1)-methylguanosine(37) in tRNA + S-adenosyl-L-homocysteine + H(+). Functionally, specifically methylates the N1 position of guanosine-37 in various cytoplasmic and mitochondrial tRNAs. Methylation is not dependent on the nature of the nucleoside 5' of the target nucleoside. This is the first step in the biosynthesis of wybutosine (yW), a modified base adjacent to the anticodon of tRNAs and required for accurate decoding. This Pediculus humanus subsp. corporis (Body louse) protein is tRNA (guanine(37)-N(1))-methyltransferase.